The following is a 333-amino-acid chain: Cytosolic sulfotransferase 10 (333 aa).

K76 to W81 serves as a coordination point for 3'-phosphoadenylyl sulfate. H146 (proton acceptor) is an active-site residue. 3'-phosphoadenylyl sulfate contacts are provided by residues R168, S176, Y234, and R299 to G301.

The protein belongs to the sulfotransferase 1 family. As to expression, expressed in roots.

The protein localises to the cytoplasm. In terms of biological role, sulfotransferase that utilizes 3'-phospho-5'-adenylyl sulfate (PAPS) as sulfonate donor to specifically catalyze the sulfate conjugation of brassinosteroids, including castasterone (CS), brassinolide (BL), related 24-epimers, and the naturally occurring (22R, 23R)-28-homobrassinosteroids. No activity on phenolic acids, desulfo-glucosinolates, flavonoids, steroids, gibberellic acids, cytokinins, phenylpropanoids, hydroxyjasmonates and coumarins. The chain is Cytosolic sulfotransferase 10 (SOT10) from Arabidopsis thaliana (Mouse-ear cress).